A 547-amino-acid chain; its full sequence is uncharacterized protein (547 aa).

Residues 1–37 (MSAASSAIPKRSDPRLLDQKKSAKSTLPKNTPENGVS) form a disordered region. The span at 10–21 (KRSDPRLLDQKK) shows a compositional bias: basic and acidic residues. Residues 24–37 (KSTLPKNTPENGVS) are compositionally biased toward polar residues. C3H1-type zinc fingers lie at residues 41-67 (NLQH…SHSL) and 68-95 (ETER…HALP). Positions 132-176 (SPSLSSKTMKNPADKANNTTATDVRGNTATSPYFPFSRSPGRHSG) are disordered. The span at 147–162 (ANNTTATDVRGNTATS) shows a compositional bias: polar residues. Position 343 is a phosphoserine (Ser-343). Tyr-344 is modified (phosphotyrosine). Phosphoserine occurs at positions 353, 355, 483, 489, 495, and 499. Thr-502 bears the Phosphothreonine mark. Residues 526 to 536 (VANSSPPWNST) show a composition bias toward polar residues. Residues 526–547 (VANSSPPWNSTVEEETPFQMDD) form a disordered region. Positions 537–547 (VEEETPFQMDD) are enriched in acidic residues.

This is an uncharacterized protein from Schizosaccharomyces pombe (strain 972 / ATCC 24843) (Fission yeast).